The following is a 528-amino-acid chain: Calcium-dependent protein kinase 4 (528 aa).

Residues 1-36 are disordered; sequence MGQEVSSVNNTKNEHHKTNKKSLKGGNERHEMKESS. Residue Gly2 is the site of N-myristoyl glycine attachment. Positions 14-23 are enriched in basic residues; that stretch reads EHHKTNKKSL. Positions 71–329 constitute a Protein kinase domain; it reads KGIKILGKGS…RDALEHEWIK (259 aa). ATP is bound by residues 76-84 and Lys99; that span reads LGKGSFGEV. The active-site Proton acceptor is Asp193. A J domain autoinhibitory motif motif is present at residues 350–358; the sequence is NIRQFQSTQ. The interval 350 to 386 is j domain; sequence NIRQFQSTQKLAQAALLYMGSKLTTIDETKELTKIFK. Residues 359 to 368 carry the J domain EF-hand interaction motif motif; the sequence is KLAQAALLYM. 4 EF-hand domains span residues 376–411, 427–458, 459–494, and 496–528; these read DETK…LLKL, EVDQ…RKLL, LSTE…SDVS, and ECWK…LCNY. The Ca(2+) site is built by Asp389, Asn391, Asp393, Gln395, Glu400, Asp436, Asp438, Asn440, Tyr442, Glu447, Asp472, Asp474, Ser476, Lys478, Glu483, Asp506, Asn508, Asp510, Glu512, and Glu517.

It belongs to the protein kinase superfamily. Ser/Thr protein kinase family. CDPK subfamily. In terms of assembly, may interact with the pre-replication MCM complex prior male gametogenesis activation. It depends on Mg(2+) as a cofactor. Post-translationally, myristoylated; myristoylation may target it to different subcellular compartments. During male gametogenesis, myristoylation is required to initiate DNA replication but not for mitotic spindle assembly or axoneme activation. In terms of processing, not palmitoylated. May be autophosphorylated on Thr-234 in vitro.

The protein resides in the cytoplasm. It is found in the cell membrane. The enzyme catalyses L-seryl-[protein] + ATP = O-phospho-L-seryl-[protein] + ADP + H(+). The catalysed reaction is L-threonyl-[protein] + ATP = O-phospho-L-threonyl-[protein] + ADP + H(+). Its activity is regulated as follows. Activated by calcium. Upon calcium binding to the EF-hand domains, the C-terminus of the junction domain (J domain) undergoes a conformational change which results in the dissociation of the pseudo-substrate inhibitory motif from the catalytic domain. This, in turn, may facilitate the autophosphorylation of the activation loop at Thr-234, which leads to the kinase activation. Intracellular calcium increase is triggered by xanthurenic acid (XA), a small mosquito molecule that induces the differentiation of specialized transmission stages, the gametocytes, into male and female gametes. Activated by a decrease in temperature (20 degrees Celsius) and an increase in pH (7.6) occurring when the parasite is ingested by in the mosquito. Its function is as follows. Calcium-dependent protein kinase which acts as a sensor and effector of intracellular Ca(2+) levels probably in part downstream of cGMP-activated PKG kinase. Plays a central role in the host erythrocytes and hepatocytes infection cycles, sexual reproduction and mosquito transmission of the parasite. During the liver stage, involved in sporozoite motility and thus in sporozoite invasion of host hepatocytes, probably together with CDPK1 and CDPK5. Involved in merosome egress from host hepatocytes, probably together with CDPK5. During the asexual blood stage, involved in merozoite invasion of host erythrocytes and motility by stabilizing the inner membrane complex, a structure below the plasma membrane which acts as an anchor for the glidosome, an acto-myosin motor. Required for cell cycle progression in the male gametocyte. During male gametogenesis in the mosquito gut, required to initiate the first round of DNA replication, probably by facilitating the assembly of the pre-replicative MCM complex, to assemble the first mitotic spindle and, at the end of gametogenesis, to initiate axoneme motility, cytokinesis and subsequent exflagellation. For each of these steps, may phosphorylate SOC1, SOC2 and SOC3, respectively. Together with CDPK1, regulates ookinete gliding in the mosquito host midgut. In Plasmodium falciparum (isolate 3D7), this protein is Calcium-dependent protein kinase 4.